Consider the following 120-residue polypeptide: MIRNTFKLVSNIAVRPAFSSTFVRQPIVASSMMVRNYGSISEKEITDRVIGVVSQYDKVSGKTVTPTTTFKELGLDSLDSADILVAVEEEFGIEIPDEEADKITSCAETISYLRKTPTAK.

A Carrier domain is found at lysine 43–proline 117. The residue at position 77 (serine 77) is an O-(pantetheine 4'-phosphoryl)serine.

The protein belongs to the acyl carrier protein (ACP) family. Complex I is composed of about 45 different subunits. Post-translationally, 4'-phosphopantetheine is transferred from CoA to a specific serine of apo-ACP by acpS. This modification is essential for activity because fatty acids are bound in thioester linkage to the sulfhydryl of the prosthetic group.

Its subcellular location is the mitochondrion. The protein operates within lipid metabolism; fatty acid biosynthesis. Carrier of the growing fatty acid chain in fatty acid biosynthesis. May be involved in the synthesis of very-long-chain fatty acids. Accessory and non-catalytic subunit of the mitochondrial membrane respiratory chain NADH dehydrogenase (Complex I), which functions in the transfer of electrons from NADH to the respiratory chain. In Dictyostelium discoideum (Social amoeba), this protein is Acyl carrier protein, mitochondrial (ndufab1).